Here is a 152-residue protein sequence, read N- to C-terminus: Endoribonuclease YbeY (152 aa).

3 residues coordinate Zn(2+): H114, H118, and H124.

It belongs to the endoribonuclease YbeY family. It depends on Zn(2+) as a cofactor.

The protein resides in the cytoplasm. In terms of biological role, single strand-specific metallo-endoribonuclease involved in late-stage 70S ribosome quality control and in maturation of the 3' terminus of the 16S rRNA. The sequence is that of Endoribonuclease YbeY from Coxiella burnetii (strain CbuK_Q154) (Coxiella burnetii (strain Q154)).